A 444-amino-acid polypeptide reads, in one-letter code: Tol-Pal system protein TolB (444 aa).

A signal peptide spans 1–19 (MRNIIYFILSLLFSVTSYA).

It belongs to the TolB family. As to quaternary structure, the Tol-Pal system is composed of five core proteins: the inner membrane proteins TolA, TolQ and TolR, the periplasmic protein TolB and the outer membrane protein Pal. They form a network linking the inner and outer membranes and the peptidoglycan layer.

The protein resides in the periplasm. Its function is as follows. Part of the Tol-Pal system, which plays a role in outer membrane invagination during cell division and is important for maintaining outer membrane integrity. This is Tol-Pal system protein TolB from Rickettsia africae (strain ESF-5).